Consider the following 293-residue polypeptide: Small ribosomal subunit protein uS2 (293 aa).

Residues 265–293 (DGGDWAASSAPAPGGENWAEAQPAEGAKW) are disordered.

The protein belongs to the universal ribosomal protein uS2 family. In terms of assembly, component of the small ribosomal subunit. Mature ribosomes consist of a small (40S) and a large (60S) subunit. The 40S subunit contains about 33 different proteins and 1 molecule of RNA (18S). The 60S subunit contains about 49 different proteins and 3 molecules of RNA (25S, 5.8S and 5S). Interacts with rps21.

Its subcellular location is the cytoplasm. Its function is as follows. Required for the assembly and/or stability of the 40S ribosomal subunit. Required for the processing of the 20S rRNA-precursor to mature 18S rRNA in a late step of the maturation of 40S ribosomal subunits. This is Small ribosomal subunit protein uS2 (rps0) from Emericella nidulans (strain FGSC A4 / ATCC 38163 / CBS 112.46 / NRRL 194 / M139) (Aspergillus nidulans).